Here is an 809-residue protein sequence, read N- to C-terminus: Transitional endoplasmic reticulum ATPase homolog 1 (809 aa).

The disordered stretch occupies residues 1-21; that stretch reads MASVPTHQSEKEKKNDELSTA. Basic and acidic residues predominate over residues 8 to 21; that stretch reads QSEKEKKNDELSTA. ATP contacts are provided by residues 253–259, asparagine 354, histidine 390, and 527–532; these read PGTGKTL and GCGKTL. The interval 779-809 is disordered; it reads FGNNFKFPGEQRGSDAPSAPVPAQDDDDLYN. The interval 803 to 809 is interaction with ufd-2; sequence DDDDLYN.

The protein belongs to the AAA ATPase family. CDC48 subfamily. In terms of assembly, homohexamer; oligomerization is ATP-independent. Forms a ring-shaped particle of 18.3 nm diameter, that displays 6-fold radial symmetry. Interacts with cdc-48.2 and thus may form heterohexamers. Forms a complex composed of cdc-48.1, him-6 and crp-1; within the complex, interacts with helicase him-6 and GTPase crp-1. Forms a complex composed of deubiquitinating enzyme atx-3, adapter ubxn-5 and cdc-48.1; within the complex, interacts (via N-terminus) with ubxn-5 and with atx-3. Forms a complex composed of deubiquitinating enzyme atx-3, E4 ubiquitin-protein ligase ufd-2 and cdc-48.1; within the complex, interacts with atx-3 and (via DDDLYN motif) with ufd-2. Interacts (via N-terminus) with atx-3 (via RRDR motif); the interaction is not required for atx-3 enzymatic activity. Forms a complex composed of cdc-48.1, myosin chaperone unc-45, ubiquitin-protein ligases ufd-2 and chn-1; within the complex, interacts (via DDDLYN motif) with ufd-2 and targets myosin chaperone unc-45 for proteasomal degradation. Forms a complex composed of ubxn-3, ufd-1, npl-4.1 and cdc-48.1; within the complex, interacts (via N-terminus) with ubxn-3 (via FPK motif) and with ufd-1. Forms a complex composed of ubxn-3, cdc-48.1 and/or cdc-48.2 and substrate cdt-1. Interacts (via N-terminus) with ubxn-1. Interacts (via N-terminus) with ubxn-2. Interacts (via N-terminus) with ubxn-4. Interacts with ubxn-6. Interacts with ufd-3. Does not interact with air-2. In terms of tissue distribution, expressed in germ cells and spermatheca. Expressed in body wall muscles.

The protein resides in the cytoplasm. Its subcellular location is the perinuclear region. It catalyses the reaction ATP + H2O = ADP + phosphate + H(+). The first ATP-binding region has low ATPase activity. The second ATP-binding region is responsible for ATPase activity. ATP binding to the first ATP-binding region induces intrinsic activity of the second ATP-binding region. While ATP binding to the first ATP-binding region appears to prevent ATP hydrolysis by the second ATP-binding region, ADP-binding to first region promotes the coordinate and cooperative ATPase cycle of the second ATP-binding region. ATP binding to the first ATP-binding region induces a conformational change, promoting the rotation of the first ATP-binding region relative to the second ATP-binding region in the hexamer. Inhibited by N-ethylmaleimide (NEM). Its function is as follows. ATP-dependent chaperone which probably uses the energy provided by ATP hydrolysis to generate mechanical force to unfold substrate proteins, disassemble protein complexes, and disaggregate protein aggregates. Can also prevent aggregation of unfolded proteins also in an ATP-independent manner. Targets polyubiquitinated proteins for proteasomal degradation by binding to 'Lys-48'-linked polyubiquitin chains. Involved in the cytoplasmic elimination of misfolded proteins exported from the ER. This pathway, known as ERAD, prevents the activation of the unfolded protein response (UPR) caused by the accumulation of misfolded proteins in the ER. In association with helicase him-6 and GTPase crp-1, regulates the unfolded protein response (UPR) following ER stress, probably independently of the ERAD pathway. Together with udf-2 and chn-1, regulates myosin assembly in body wall muscles by targeting myosin chaperone unc-45 for proteasomal degradation. Together with the ufd-1-npl-4 complex, controls the switch from spermatogenesis to oogenesis by regulating E3 ligase cul-2 complex-mediated tra-1 proteasomal degradation. During oocyte meiosis and together with cdc-48.2, required for chromosome condensation at the diakinesis phase in prophase I and for progression of metaphase I. During the first embryonic cell division, regulates DNA replication and thus chromosome segregation and decondensation, and nuclear envelope re-assembly. In S phase and in association with ufd-1, npl-4.1 and/or npl-4.2 and ubxn-3, ensures the degradation of DNA licensing factor cdt-1 after the initiation of DNA replication and thus the disassembly of the DNA replication CMG helicase complex by promoting the dissociation from chromatin of several of its components including cdc-45 and sld-5. Regulates ubxn-3 nuclear localization during S phase. During the first embryonic cell divisions and together with cdc-48.2, regulates the re-assembly of the nuclear envelope after mitosis possibly by inactivating kinase air-2, a component of the chromosomal passenger complex (CPC). However, in another study, cdc-48.1 does not appear to be implicated in the regulation of air-2. This chain is Transitional endoplasmic reticulum ATPase homolog 1, found in Caenorhabditis elegans.